We begin with the raw amino-acid sequence, 1462 residues long: Protein peg1 (1462 aa).

Disordered stretches follow at residues 528-563 and 573-592; these read SFSK…SRER and FHST…SIAI. Low complexity-rich tracts occupy residues 538-552 and 574-589; these read SSNS…RLGL and HSTS…HSPS. Serine 599 is subject to Phosphoserine. Positions 838-928 are disordered; it reads SSTHQEHLSK…NCSEESLDDH (91 aa). Low complexity predominate over residues 847-866; the sequence is KNLPTLNTSSSSNSSQTDLL. Residues 870–896 are compositionally biased toward basic and acidic residues; that stretch reads GKGETKETEMQSPIESKEGLLSKDTHI. Serine 1221 carries the phosphoserine modification. The stretch at 1342 to 1367 forms a coiled coil; sequence TLIAEIADLQGLYEFTQQRLQSLNTE.

This sequence belongs to the CLASP family. Interacts with microtubules. Interacts with dhc1, mal3 and tea1.

It localises to the cytoplasm. It is found in the cytoskeleton. The protein resides in the spindle. The protein localises to the microtubule organizing center. Its subcellular location is the spindle pole body. In terms of biological role, microtubule binding protein that regulates the stability of dynamic microtubules. Required for mitotic spindle formation. In Schizosaccharomyces pombe (strain 972 / ATCC 24843) (Fission yeast), this protein is Protein peg1 (peg1).